A 300-amino-acid chain; its full sequence is MAATIIDGKAFAAKVRAQVAEHVTRIKQDHGITPGLAVVLVGEDPASQVYVRSKGKQTVEAGMNSYEHKLDADTSEADLLAVVDKLNKDPNVHGILVQLPLPKHLDEDLIINSIDPAKDVDGFHISNVGLLGTGQKSMVPCTPLGCLMMLREHHGSLSGMNAVVIGRSNIVGKPMAQLLLNDSCTVTIAHSRTKDLPDVVRGADIVVAAVGRPEMVPGDWIKPGATVIDVGINRIDAPEKGEGKTRLVGDCHYDSCAETAGAITPVPGGVGPMTIACLLANTVTSCCRANGLEEPTGLTA.

NADP(+) is bound by residues 166 to 168, serine 191, and isoleucine 232; that span reads GRS.

The protein belongs to the tetrahydrofolate dehydrogenase/cyclohydrolase family. In terms of assembly, homodimer.

It carries out the reaction (6R)-5,10-methylene-5,6,7,8-tetrahydrofolate + NADP(+) = (6R)-5,10-methenyltetrahydrofolate + NADPH. The enzyme catalyses (6R)-5,10-methenyltetrahydrofolate + H2O = (6R)-10-formyltetrahydrofolate + H(+). It functions in the pathway one-carbon metabolism; tetrahydrofolate interconversion. In terms of biological role, catalyzes the oxidation of 5,10-methylenetetrahydrofolate to 5,10-methenyltetrahydrofolate and then the hydrolysis of 5,10-methenyltetrahydrofolate to 10-formyltetrahydrofolate. The chain is Bifunctional protein FolD 2 from Roseobacter denitrificans (strain ATCC 33942 / OCh 114) (Erythrobacter sp. (strain OCh 114)).